Reading from the N-terminus, the 159-residue chain is Fimbrial protein MyfA (159 aa).

Residues 1-29 (MNMKKFVKKPLAIAVLMLASGGMVNMVHA) form the signal peptide.

As to quaternary structure, forms a homomer composed of subunits assembled in a large structure resistant to proteases and chaotropic agents.

The protein resides in the fimbrium. In terms of biological role, major pilus subunit. Expressed only in pathogenic serotypes, it is part of myf, a probable virulence factor. This Yersinia enterocolitica protein is Fimbrial protein MyfA (myfA).